The following is a 746-amino-acid chain: Ferrienterobactin receptor (746 aa).

Positions 1–22 are cleaved as a signal peptide; that stretch reads MNKKIHSLALLVNLGIYGVAQA. The TonB box motif lies at 34–41; that stretch reads DTIVVTAA. The 128-residue stretch at 42 to 169 folds into the TBDR plug domain; the sequence is EQNLQAPGVS…AGGVVNIITK (128 aa). The segment at 76 to 96 is disordered; that stretch reads GVNLTGNSTSGQRGNNRQIDI. The span at 79-93 shows a compositional bias: polar residues; the sequence is LTGNSTSGQRGNNRQ. Residues 174–746 form the TBDR beta-barrel domain; the sequence is EWHGSWDAYF…TWYMSVNTHF (573 aa). The TonB C-terminal box motif lies at 729-746; the sequence is YTYNEPGRTWYMSVNTHF.

It belongs to the TonB-dependent receptor family.

It is found in the cell outer membrane. Functionally, this protein is involved in the initial step of iron uptake by binding ferrienterobactin (Fe-ENT), an iron chelatin siderophore that allows E.coli to extract iron from the environment. FepA also acts as a receptor for colicins B and D. This chain is Ferrienterobactin receptor (fepA), found in Escherichia coli (strain K12).